The sequence spans 245 residues: Lytic switch protein BZLF1 (245 aa).

Residues 1 to 167 form a transactivation region; the sequence is MMDPNSTSED…RTRKPLQPES (167 aa). Residues threonine 14 and threonine 159 each carry the phosphothreonine modification. The interval 145 to 167 is disordered; the sequence is GAPQPAPAAAPARRTRKPLQPES. A Bipartite nuclear localization signal motif is present at residues 157 to 194; the sequence is RRTRKPLQPESLEECDSELEIKRYKNRVASRKCRAKFK. Residues serine 167, serine 173, and serine 186 each carry the phosphoserine modification. The segment at 178–195 is basic motif; sequence KRYKNRVASRKCRAKFKH. One can recognise a bZIP domain in the interval 178–228; it reads KRYKNRVASRKCRAKFKHLLQHYREVASAKSSENDRLRLLLKQMCPSLDVD. The tract at residues 196–228 is leucine-zipper; that stretch reads LLQHYREVASAKSSENDRLRLLLKQMCPSLDVD. An accessory activation domain region spans residues 229 to 245; the sequence is SIIPRTPDVLHEDLLNF.

It belongs to the bZIP family. Homodimer. Interacts (via b-ZIP domain) with the DNA polymerase processivity factor BMRF1 (via N-terminus); this interaction may inhibit BZLF1-induced transcription of the BMRF1 promoter. Interacts with human UBN1, CRTC2 and RACK1. Interacts (via N-terminus) with human PAX5 (via N-terminus); this interaction inhibits BZLF1-mediated lytic viral reactivation. Interacts (via leucine-zipper domain) with host CEBPA; this interaction induces G1 host cell cycle arrest. Interacts (via C-terminus) with host TP53BP1 (via C-terminus); this interaction is involved in the activation of the viral lytic cycle. Interacts with host chromatin-remodeling ATPase INO80; this interaction participates to the activation of early lytic viral genes by BZLF1. Interacts with host regulator of chromatin SMARCA5/hSNF2H; this interaction participates to the activation of early lytic viral genes by BZLF1. Interacts with host PLSCR1/Phospholipid scramblase 1; this interaction negatively regulates the transcriptional regulatory activity of BZLF1 by preventing the formation of the BZLF1-CBP complex.

The protein resides in the host nucleus. In terms of biological role, transcription factor that acts as a molecular switch to induce the transition from the latent to the lytic or productive phase of the virus cycle. Mediates the switch from the latent to the lytic cycle of infection in cells containing a highly methylated viral genome. Probably binds to silenced chromatin and recruits host chromatin-remodeling enzymes. Regulates this switch by binding to 2 types of ZEBRA response elements (ZREs): the CpG-free AP-1 like elements (latency) and the methylated CpG-containing elements (lytic replication). Activates preferentially the methylated forms of the viral lytic R (BRLF1) and Na (BRRF1) gene promoters, the latters being the first genes activated during Z-mediated reactivation in latently infected cells. BZLF1 and BRLF1 act together to trigger lytic replication. Also binds the lytic origin of replication, oriLyt. Induces G1 cell cycle arrest by stabilizing the host CCAAT/enhancer binding protein CEBPA. This function is important because the lytic cycle preferentially takes place in host cells arrested in G1. The protein is Lytic switch protein BZLF1 of Homo sapiens (Human).